A 481-amino-acid chain; its full sequence is ATP synthase subunit beta (481 aa).

An ATP-binding site is contributed by 167–174 (GGAGVGKT).

It belongs to the ATPase alpha/beta chains family. F-type ATPases have 2 components, CF(1) - the catalytic core - and CF(0) - the membrane proton channel. CF(1) has five subunits: alpha(3), beta(3), gamma(1), delta(1), epsilon(1). CF(0) has three main subunits: a(1), b(2) and c(9-12). The alpha and beta chains form an alternating ring which encloses part of the gamma chain. CF(1) is attached to CF(0) by a central stalk formed by the gamma and epsilon chains, while a peripheral stalk is formed by the delta and b chains.

It is found in the cell membrane. It catalyses the reaction ATP + H2O + 4 H(+)(in) = ADP + phosphate + 5 H(+)(out). Its function is as follows. Produces ATP from ADP in the presence of a proton gradient across the membrane. The catalytic sites are hosted primarily by the beta subunits. This chain is ATP synthase subunit beta, found in Corynebacterium efficiens (strain DSM 44549 / YS-314 / AJ 12310 / JCM 11189 / NBRC 100395).